The following is a 425-amino-acid chain: Serine--tRNA ligase (425 aa).

Residue 230-232 coordinates L-serine; that stretch reads TAE. Residue 261–263 participates in ATP binding; that stretch reads RSE. Glu-284 provides a ligand contact to L-serine. 348–351 contacts ATP; that stretch reads EISS. L-serine is bound at residue Ser-384.

This sequence belongs to the class-II aminoacyl-tRNA synthetase family. Type-1 seryl-tRNA synthetase subfamily. As to quaternary structure, homodimer. The tRNA molecule binds across the dimer.

Its subcellular location is the cytoplasm. It carries out the reaction tRNA(Ser) + L-serine + ATP = L-seryl-tRNA(Ser) + AMP + diphosphate + H(+). The enzyme catalyses tRNA(Sec) + L-serine + ATP = L-seryl-tRNA(Sec) + AMP + diphosphate + H(+). Its pathway is aminoacyl-tRNA biosynthesis; selenocysteinyl-tRNA(Sec) biosynthesis; L-seryl-tRNA(Sec) from L-serine and tRNA(Sec): step 1/1. Functionally, catalyzes the attachment of serine to tRNA(Ser). Is also able to aminoacylate tRNA(Sec) with serine, to form the misacylated tRNA L-seryl-tRNA(Sec), which will be further converted into selenocysteinyl-tRNA(Sec). The protein is Serine--tRNA ligase of Streptococcus equi subsp. equi (strain 4047).